The sequence spans 523 residues: Peptide chain release factor 3 (523 aa).

Residues 8-275 (KKRRTFAIIS…TFLEYAPEPH (268 aa)) enclose the tr-type G domain. GTP contacts are provided by residues 17–24 (SHPDAGKT), 85–89 (DTPGH), and 139–142 (NKLD).

It belongs to the TRAFAC class translation factor GTPase superfamily. Classic translation factor GTPase family. PrfC subfamily.

The protein resides in the cytoplasm. Its function is as follows. Increases the formation of ribosomal termination complexes and stimulates activities of RF-1 and RF-2. It binds guanine nucleotides and has strong preference for UGA stop codons. It may interact directly with the ribosome. The stimulation of RF-1 and RF-2 is significantly reduced by GTP and GDP, but not by GMP. This Lactococcus lactis subsp. cremoris (strain SK11) protein is Peptide chain release factor 3.